The sequence spans 254 residues: Ribosomal RNA small subunit methyltransferase J (254 aa).

Residues 101–102 (RD), 117–118 (ER), 153–154 (SS), and D171 contribute to the S-adenosyl-L-methionine site.

It belongs to the methyltransferase superfamily. RsmJ family.

The protein resides in the cytoplasm. It carries out the reaction guanosine(1516) in 16S rRNA + S-adenosyl-L-methionine = N(2)-methylguanosine(1516) in 16S rRNA + S-adenosyl-L-homocysteine + H(+). In terms of biological role, specifically methylates the guanosine in position 1516 of 16S rRNA. In Enterobacter sp. (strain 638), this protein is Ribosomal RNA small subunit methyltransferase J.